Here is a 107-residue protein sequence, read N- to C-terminus: MFFSSYYDKGNLKKNSCLAIISASSSQPKPLLTKARSNIFLALKILNNEPNLPSFLLFYASKKSKITAQITKLHIKGDLPSHRYSLRYRLNGGNFMCSIINIQQWYV.

This is an uncharacterized protein from Saccharomyces cerevisiae (strain ATCC 204508 / S288c) (Baker's yeast).